The chain runs to 285 residues: Golgi phosphoprotein 3-like (285 aa).

The interval 1-43 is disordered; that stretch reads MTTLTHRTRRTEVSKSSEKKIESEEDTNQERSPDNEDPGDSKD. Residues 10 to 43 show a composition bias toward basic and acidic residues; the sequence is RTEVSKSSEKKIESEEDTNQERSPDNEDPGDSKD. 2 residues coordinate a 1,2-diacyl-sn-glycero-3-phospho-(1D-myo-inositol 4-phosphate): W67 and R76. S112 is modified (phosphoserine). A 1,2-diacyl-sn-glycero-3-phospho-(1D-myo-inositol 4-phosphate) contacts are provided by R157 and R160. A beta-hairpin required for oligomerization region spans residues 176 to 187; the sequence is EKQNFLLFDMTT.

This sequence belongs to the GOLPH3/VPS74 family. As to quaternary structure, homooligomer. Does not interact MYO18; differs from GOLPH3 by its inability to interact with MYO18. May interact with ARF1. Expressed in a subset of tissues tested with higher expression in salivary gland, small intestine and skin (at protein level).

The protein resides in the golgi apparatus. Its subcellular location is the golgi stack membrane. It is found in the trans-Golgi network membrane. Functionally, phosphatidylinositol-4-phosphate-binding protein that may antagonize the action of GOLPH3 which is required for the process of vesicle budding at the Golgi and anterograde transport to the plasma membrane. This Mus musculus (Mouse) protein is Golgi phosphoprotein 3-like (Golph3l).